A 393-amino-acid chain; its full sequence is SEC12-like protein 2 (393 aa).

The residue at position 2 (alanine 2) is an N-acetylalanine. At 2–367 (ANQSTETNQP…EQKGDKPGVR (366 aa)) the chain is on the cytoplasmic side. Residues 41–67 (EKSEDDDESSSSSSSSRSCIVLSGGGG) are disordered. A Phosphoserine modification is found at serine 43. 4 WD repeats span residues 151–190 (RDVGQQLALAFNPEGSVLAAGAEDGTLRVFKWPSMNTLLN), 193–231 (QAHSSVKCLTFSESGQFLVSLGGPVCRVWDVNASAAVAS), 283–322 (IKKNSISAFNVSADGKLLAIGTLEGDVLILESTRMQTIQV), and 326–367 (AHLG…PGVR). A helical; Signal-anchor for type II membrane protein transmembrane segment spans residues 368–388 (WWLLVLLIVLLYVVAYYYMKA). Residues 389–393 (KGIIP) are Lumenal-facing.

In terms of assembly, interacts with BZIP28.

Its subcellular location is the endoplasmic reticulum membrane. The protein resides in the golgi apparatus. It is found in the cis-Golgi network membrane. Required for the formation or budding of transport vesicles from the ER. In Arabidopsis thaliana (Mouse-ear cress), this protein is SEC12-like protein 2 (STL2P).